The chain runs to 144 residues: 3-hydroxyacyl-[acyl-carrier-protein] dehydratase FabZ (144 aa).

The active site involves His-49.

It belongs to the thioester dehydratase family. FabZ subfamily.

Its subcellular location is the cytoplasm. The enzyme catalyses a (3R)-hydroxyacyl-[ACP] = a (2E)-enoyl-[ACP] + H2O. Its function is as follows. Involved in unsaturated fatty acids biosynthesis. Catalyzes the dehydration of short chain beta-hydroxyacyl-ACPs and long chain saturated and unsaturated beta-hydroxyacyl-ACPs. This Clostridium kluyveri (strain NBRC 12016) protein is 3-hydroxyacyl-[acyl-carrier-protein] dehydratase FabZ.